Reading from the N-terminus, the 357-residue chain is Membrane-bound lytic murein transglycosylase C (357 aa).

Residues 1 to 15 form the signal peptide; it reads MKKYLLLALLPFLYA. C16 carries the N-palmitoyl cysteine lipid modification. C16 carries the S-diacylglycerol cysteine lipid modification.

This sequence belongs to the transglycosylase Slt family.

It localises to the cell outer membrane. It carries out the reaction Exolytic cleavage of the (1-&gt;4)-beta-glycosidic linkage between N-acetylmuramic acid (MurNAc) and N-acetylglucosamine (GlcNAc) residues in peptidoglycan, from either the reducing or the non-reducing ends of the peptidoglycan chains, with concomitant formation of a 1,6-anhydrobond in the MurNAc residue.. In terms of biological role, murein-degrading enzyme. May play a role in recycling of muropeptides during cell elongation and/or cell division. In Haemophilus influenzae (strain 86-028NP), this protein is Membrane-bound lytic murein transglycosylase C.